The chain runs to 339 residues: Dihydroorotate dehydrogenase (quinone) (339 aa).

Residues 62 to 66 (AGMDK) and threonine 86 contribute to the FMN site. Position 66 (lysine 66) interacts with substrate. 111 to 115 (NRMGF) contacts substrate. Residues asparagine 139 and asparagine 172 each contribute to the FMN site. Position 172 (asparagine 172) interacts with substrate. Residue serine 175 is the Nucleophile of the active site. Residue asparagine 177 participates in substrate binding. The FMN site is built by lysine 217 and threonine 245. 246-247 (NT) is a substrate binding site. FMN contacts are provided by residues glycine 268, glycine 297, and 318–319 (YS).

The protein belongs to the dihydroorotate dehydrogenase family. Type 2 subfamily. Monomer. Requires FMN as cofactor.

The protein resides in the cell membrane. It carries out the reaction (S)-dihydroorotate + a quinone = orotate + a quinol. It functions in the pathway pyrimidine metabolism; UMP biosynthesis via de novo pathway; orotate from (S)-dihydroorotate (quinone route): step 1/1. Functionally, catalyzes the conversion of dihydroorotate to orotate with quinone as electron acceptor. This is Dihydroorotate dehydrogenase (quinone) from Shewanella sp. (strain MR-4).